The primary structure comprises 396 residues: 1-deoxy-D-xylulose 5-phosphate reductoisomerase (396 aa).

The NADPH site is built by threonine 13, glycine 14, serine 15, valine 16, and asparagine 127. Lysine 128 contacts 1-deoxy-D-xylulose 5-phosphate. Glutamate 129 lines the NADPH pocket. Aspartate 153 is a Mn(2+) binding site. Residues serine 154, glutamate 155, serine 184, and histidine 207 each coordinate 1-deoxy-D-xylulose 5-phosphate. Residue glutamate 155 participates in Mn(2+) binding. Glycine 213 is an NADPH binding site. 1-deoxy-D-xylulose 5-phosphate is bound by residues serine 220, asparagine 225, lysine 226, and glutamate 229. Mn(2+) is bound at residue glutamate 229.

It belongs to the DXR family. Mg(2+) serves as cofactor. The cofactor is Mn(2+).

The catalysed reaction is 2-C-methyl-D-erythritol 4-phosphate + NADP(+) = 1-deoxy-D-xylulose 5-phosphate + NADPH + H(+). Its pathway is isoprenoid biosynthesis; isopentenyl diphosphate biosynthesis via DXP pathway; isopentenyl diphosphate from 1-deoxy-D-xylulose 5-phosphate: step 1/6. Functionally, catalyzes the NADPH-dependent rearrangement and reduction of 1-deoxy-D-xylulose-5-phosphate (DXP) to 2-C-methyl-D-erythritol 4-phosphate (MEP). The chain is 1-deoxy-D-xylulose 5-phosphate reductoisomerase from Pseudomonas fluorescens (strain SBW25).